A 236-amino-acid chain; its full sequence is CD81 antigen (236 aa).

Residues 1 to 12 lie on the Cytoplasmic side of the membrane; it reads MGVEGCTKCIKY. A helical transmembrane segment spans residues 13-33; that stretch reads LLFVFNFVFWLAGGVILGVAL. At 34-63 the chain is on the extracellular side; the sequence is WLRHDPQTTSLLYLELGNKPAPNTFYVGIY. A helical membrane pass occupies residues 64-84; it reads ILIAVGAVMMFVGFLGCYGAI. Residues 85 to 89 are Cytoplasmic-facing; sequence QESQC. Residues 90–112 form a helical membrane-spanning segment; sequence LLGTFFTCLVILFACEVAAGIWG. The Extracellular portion of the chain corresponds to 113 to 201; the sequence is FVNKDQIAKD…QKIDELFSGK (89 aa). 2 disulfide bridges follow: Cys-156/Cys-190 and Cys-157/Cys-175. Residues 202-224 form a helical membrane-spanning segment; the sequence is LYLIGIAAIVVAVIMIFEMILSM. Glu-219 serves as a coordination point for cholesterol. The Cytoplasmic portion of the chain corresponds to 225–236; the sequence is VLCCGIRNSSVY.

This sequence belongs to the tetraspanin (TM4SF) family. In terms of assembly, homodimer. Part of a complex composed of CD19, CR2/CD21, CD81 and IFITM1/CD225 in the membrane of mature B cells. Interacts (via the second extracellular domain) with CD19; this interaction is initiated early during biosynthesis in the ER and enables trafficking of only properly folded CD19. Part of a complex that includes MHC class II/HLA-DR molecules and IFITM1. Interacts with IFITM1. Interacts with IFITM2 and IFITM3. Part of integrin-tetraspanin complex composed of CD9, CD81, beta-1 and beta-2 integrins in the membrane of monocyte/macrophages. Interacts (via the second extracellular domain) with integrin ITGAV:ITGB3. Interacts with CD247/CD3 zeta, ICAM1 and CD9 at the immune synapse on T cell membrane. Part of a GPCR-tetraspanin complex consisting at least of ADGRG1, CD81, possibly CD9, and GNA11 in which CD81 enhances the association of ADGRG1 with GNA11. Part of a complex composed of CD9, CD81, PTGFRN and IGSF8. Interacts directly with IGSF8. Interacts with CD53 and SCIMP. Interacts with SAMHD1 (via its C-terminus). Interacts with glypican GPC3 and with the transcriptional repressor HHEX; binding to GPC3 decreases the availability of free CD81 for binding to HHEX, resulting in nuclear translocation of HHEX and transcriptional repression. Interacts with CLDN1. Interacts with CLDN6 and CLDN9. Not glycosylated. In terms of processing, likely constitutively palmitoylated at low levels. Protein palmitoylation is up-regulated upon coligation of BCR and CD9-C2R-CD81 complexes in lipid rafts. As to expression, expressed in oocytes (at protein level). Highly expressed in granulosa cells. Expressed in skeletal muscle mainly in endothelial cells of endomysial capillaries, in satellite cells and myoblasts (at protein level). Expressed in hepatocytes (at protein level).

The protein localises to the cell membrane. It localises to the basolateral cell membrane. Its function is as follows. Structural component of specialized membrane microdomains known as tetraspanin-enriched microdomains (TERMs), which act as platforms for receptor clustering and signaling. Essential for trafficking and compartmentalization of CD19 receptor on the cell surface of activated B cells. Upon initial encounter with a microbial pathogen, enables the assembly of CD19-CR2 and B cell receptor complexes at signaling TERMs, lowering the threshold dose of antigen required to trigger B cell clonal expansion and humoral immune response. In T cells, associates with CD4 or CD8 coreceptors and defines the maturation state of antigen-induced synapses with B cells. Facilitates localization of CD3 in these immune synapses, required for costimulation and sustained activation of T cells, preferentially triggering T helper type 2 immune response. Can act both as positive and negative regulator of homotypic or heterotypic cell-cell fusion processes. In myoblasts, associates with another tetraspanin CD9 in complex with PTGFRN and inhibits myotube fusion during muscle regeneration. In macrophages, associates with CD9 and beta-1 and beta-2 integrins, and prevents macrophage fusion into multinucleated giant cells specialized in ingesting complement-opsonized large particles. Also prevents the fusion between mononuclear cell progenitors into osteoclasts in charge of bone resorption. Positively regulates sperm-egg fusion and may be involved in the acrosome reaction. Regulates protein trafficking in intracellular compartments. In T cells, associates with dNTPase SAMHD1 and defines its subcellular location, enabling its degradation by the proteasome and thereby controlling intracellular dNTP levels. Also regulates integrin-dependent migration of macrophages, particularly relevant for inflammatory response in the lung. In terms of biological role, (Microbial infection) Specifically required for Plasmodium yoelii infectivity of hepatocytes, controlling sporozoite entry in hepatocytes via the parasitophorous vacuole and subsequent parasite differentiation to exoerythrocytic forms. The chain is CD81 antigen from Mus musculus (Mouse).